The primary structure comprises 176 residues: Adenine phosphoribosyltransferase (176 aa).

This sequence belongs to the purine/pyrimidine phosphoribosyltransferase family. In terms of assembly, homodimer.

The protein resides in the cytoplasm. The catalysed reaction is AMP + diphosphate = 5-phospho-alpha-D-ribose 1-diphosphate + adenine. It functions in the pathway purine metabolism; AMP biosynthesis via salvage pathway; AMP from adenine: step 1/1. Functionally, catalyzes a salvage reaction resulting in the formation of AMP, that is energically less costly than de novo synthesis. The chain is Adenine phosphoribosyltransferase from Borreliella afzelii (strain PKo) (Borrelia afzelii).